The sequence spans 277 residues: Chitosanase (277 aa).

The first 35 residues, 1 to 35 (MKISMQKADFWKKAAISLLVFTMFFTLMMSETVFA), serve as a signal peptide directing secretion. E54 functions as the Proton donor in the catalytic mechanism. The active-site Nucleophile is D70.

Belongs to the glycosyl hydrolase 46 family.

It localises to the secreted. It carries out the reaction Endohydrolysis of beta-(1-&gt;4)-linkages between D-glucosamine residues in a partly acetylated chitosan.. Its function is as follows. Aids in the defense against invading fungal pathogens by degrading their cell wall chitosan. This Bacillus subtilis (strain 168) protein is Chitosanase (csn).